The primary structure comprises 401 residues: Beta-ketoadipyl-CoA thiolase (401 aa).

The active-site Acyl-thioester intermediate is the C91. Residues H357 and C387 each act as proton acceptor in the active site.

This sequence belongs to the thiolase-like superfamily. Thiolase family. In terms of assembly, homotetramer.

It catalyses the reaction succinyl-CoA + acetyl-CoA = 3-oxoadipyl-CoA + CoA. It participates in aromatic compound metabolism; beta-ketoadipate pathway; acetyl-CoA and succinyl-CoA from 3-oxoadipate: step 2/2. Its function is as follows. Catalyzes thiolytic cleavage of beta-ketoadipyl-CoA to succinyl-CoA and acetyl-CoA. This chain is Beta-ketoadipyl-CoA thiolase (pcaF), found in Pseudomonas knackmussii (strain DSM 6978 / CCUG 54928 / LMG 23759 / B13).